A 290-amino-acid chain; its full sequence is L-proline cis-3-hydroxylase 2 (290 aa).

Fe cation is bound by residues histidine 107, aspartate 109, and histidine 158. Arginine 168 is a binding site for 2-oxoglutarate.

This sequence belongs to the L-proline cis-4-/cis-3-hydroxylase family. As to quaternary structure, homodimer. It depends on Fe(2+) as a cofactor.

It carries out the reaction L-proline + 2-oxoglutarate + O2 = cis-3-hydroxy-L-proline + succinate + CO2. Its activity is regulated as follows. Inhibited by metal ions such as Co(2+), Zn(2+), Ni(2+) or Cu(2+). Is also inhibited by EDTA in vitro. Functionally, dioxygenase that catalyzes the 2-oxoglutarate-dependent selective hydroxylation of free L-proline to cis-3-hydroxy-L-proline (cis-3-Hyp). The chain is L-proline cis-3-hydroxylase 2 from Streptomyces sp.